The chain runs to 512 residues: Methionine--tRNA ligase (512 aa).

Residues 11–21 (YYASGKPHIGH) carry the 'HIGH' region motif. Residues Cys-126, Cys-129, Cys-143, and His-147 each contribute to the Zn(2+) site. Residues 301 to 305 (KMSKS) carry the 'KMSKS' region motif. Lys-304 is a binding site for ATP.

It belongs to the class-I aminoacyl-tRNA synthetase family. MetG type 2A subfamily. Monomer. Requires Zn(2+) as cofactor.

The protein localises to the cytoplasm. It carries out the reaction tRNA(Met) + L-methionine + ATP = L-methionyl-tRNA(Met) + AMP + diphosphate. Functionally, is required not only for elongation of protein synthesis but also for the initiation of all mRNA translation through initiator tRNA(fMet) aminoacylation. This Mycoplasma genitalium (strain ATCC 33530 / DSM 19775 / NCTC 10195 / G37) (Mycoplasmoides genitalium) protein is Methionine--tRNA ligase (metG).